Reading from the N-terminus, the 168-residue chain is Small ribosomal subunit protein bS6 (168 aa).

A disordered region spans residues 103 to 168; it reads RQAIAEEKEK…AAADKSDDNA (66 aa). The segment covering 106–115 has biased composition (basic and acidic residues); the sequence is IAEEKEKKAE. The segment covering 116–125 has biased composition (low complexity); it reads GQAAADAAPA.

This sequence belongs to the bacterial ribosomal protein bS6 family.

In terms of biological role, binds together with bS18 to 16S ribosomal RNA. The sequence is that of Small ribosomal subunit protein bS6 from Desulfosudis oleivorans (strain DSM 6200 / JCM 39069 / Hxd3) (Desulfococcus oleovorans).